We begin with the raw amino-acid sequence, 1844 residues long: Non-structural replication polyprotein (1844 aa).

The Alphavirus-like MT domain maps to Ser58–Leu219. The disordered stretch occupies residues Thr571–Asp739. Composition is skewed to low complexity over residues Ser609 to Ala621 and Leu726 to Leu736. The OTU domain occupies Ser728–Ser879. The Peptidase C21 domain maps to Gln730 to Lys884. Residue Cys783 is the For protease activity of the active site. Residues Asp859–Pro887 form a disordered region. Positions Gly865–Pro867 match the GPP flap motif. His869 acts as the For protease activity in catalysis. The (+)RNA virus helicase ATP-binding domain maps to Thr946–Cys1103. Residue Gly976–Thr983 participates in ATP binding. The 133-residue stretch at Trp1104–Pro1236 folds into the (+)RNA virus helicase C-terminal domain. The RdRp catalytic domain maps to Thr1572–Trp1678.

The protein belongs to the Tymoviridae non-structural replication polyprotein family. As to quaternary structure, interacts with host ubiquitin. In terms of processing, specific enzymatic cleavages by the host yield mature proteins.

It is found in the host chloroplast envelope. It carries out the reaction Thiol-dependent hydrolysis of ester, thioester, amide, peptide and isopeptide bonds formed by the C-terminal Gly of ubiquitin (a 76-residue protein attached to proteins as an intracellular targeting signal).. It catalyses the reaction RNA(n) + a ribonucleoside 5'-triphosphate = RNA(n+1) + diphosphate. Functionally, acts as a cysteine protease, methyltransferase and deubiquitinase. The cysteine protease activity cleaves the polyprotein giving rise to mature proteins. The protease has the ability to process substrates in trans. The methyltransferase domain is probably involved in viral RNA capping. The deubiquitylating activity counteracts the degradation of the viral polymerase mediated by the host ubiquitin-proteasome system. The polymerase is thus stabilized and infectivity is increased. Favors K63 poly-Ub linkage. RNA-directed RNA polymerase is responsible for the replication and transcription of the genome. The sequence is that of Non-structural replication polyprotein from Turnip yellow mosaic virus.